Reading from the N-terminus, the 242-residue chain is MAETEALSKLREDFRMQNKSVFILGASGETGRVLLKEILEQGLFSKVTLIGRRKLTFDEEAYKNVNQEVVDFEKLDDYASAFQGHDVGFCCLGTTRVKAGAEGFVRVDRDYVLKSAELAKAGGCKHFNLLSSKGADKSSNFLYLQVKGEVEAKVEELKFDRYSVFRPGVLLCDRQESRPGEWLVRKFFGSLPESWASGYSVPVVTVVRAMLNNMVRPRDKQMELLENKAIHDLGKVHGSLKP.

An N-acetylalanine modification is found at Ala2. Positions Ala2–Gly25 are required for interaction with elongation factor EEF1A1. 12 residues coordinate NADPH: Ser27, Gly28, Glu29, Thr30, Arg52, Arg53, Leu92, Gly93, Tyr143, Lys147, Leu170, and Arg178. The active-site Proton acceptor is the Tyr143. Lys147 is a catalytic residue.

As to quaternary structure, monomer. Forms homodimers during oxidative stress. Interacts (via N-terminus) with elongation factor EEF1A1 (via middle-region); the interaction is direct and competes with EEF1A1 binding to guanyl-nucleotide exchange factor EEF1B2, thereby inhibiting GDP for GTP exchange and reactivation of EEF1A1. Interacts with nuclear transport receptors XPO4, IPO5/RANBP5, IPO7, IPO9 and KPNB1 as well as GCN1L1/GCN1 and LRPPRC probably through their HEAT repeats. Binds NCOA5/CIA.

It localises to the cytoplasm. Represses translation by preventing reactivation of elongation factor eEF1A. May also inhibit nuclear import by competing with nuclear import substrates for binding to a subset of nuclear transport receptors. Has additionally been proposed to act as a redox sensor involved in cellular oxidative stress surveillance. The chain is Protein HTATIP2 (HTATIP2) from Pongo pygmaeus (Bornean orangutan).